Reading from the N-terminus, the 147-residue chain is Protein SPMIP3 (147 aa).

The polypeptide is Protein SPMIP3 (Homo sapiens (Human)).